We begin with the raw amino-acid sequence, 306 residues long: Probable arylamine N-acetyltransferase 3 (306 aa).

The active-site Acyl-thioester intermediate is the C75. Active-site residues include H115 and D130.

Belongs to the arylamine N-acetyltransferase family.

It carries out the reaction an arylamine + acetyl-CoA = an N-acetylarylamine + CoA. This chain is Probable arylamine N-acetyltransferase 3, found in Dictyostelium discoideum (Social amoeba).